A 95-amino-acid chain; its full sequence is Large ribosomal subunit protein bL25 (95 aa).

It belongs to the bacterial ribosomal protein bL25 family. Part of the 50S ribosomal subunit; part of the 5S rRNA/L5/L18/L25 subcomplex. Contacts the 5S rRNA. Binds to the 5S rRNA independently of L5 and L18.

This is one of the proteins that binds to the 5S RNA in the ribosome where it forms part of the central protuberance. The sequence is that of Large ribosomal subunit protein bL25 from Haemophilus influenzae (strain 86-028NP).